The sequence spans 346 residues: Histone PARylation factor 1 (346 aa).

The residue at position 1 (Met1) is an N-acetylmethionine. Residues Lys19, Lys186, and Lys233 each carry the N6-acetyllysine modification. Asp235 is modified (polyADP-ribosyl aspartic acid). The residue at position 238 (Tyr238) is an ADP-ribosyltyrosine. A PolyADP-ribosyl glutamic acid modification is found at Glu240. The interval 242–346 (PETDADLKRI…SEENIDQLAG (105 aa)) is interaction with PARP1. Catalysis depends on Glu284, which acts as the Proton donor.

Belongs to the HPF1 family. In terms of assembly, interacts with PARP1 (via the PARP catalytic domain). Interacts with PARP2 (via the PARP catalytic domain). Interacts with core nucleosomes in a PARP1- and PARP2-dependent manner.

The protein localises to the chromosome. The protein resides in the nucleus. In terms of biological role, cofactor for serine ADP-ribosylation that confers serine specificity on PARP1 and PARP2 and plays a key role in DNA damage response. Initiates the repair of double-strand DNA breaks: recruited to DNA damage sites by PARP1 and PARP2 and switches the amino acid specificity of PARP1 and PARP2 from aspartate or glutamate to serine residues, licensing serine ADP-ribosylation of target proteins. Serine ADP-ribosylation of target proteins, such as histones, promotes decompaction of chromatin and the recruitment of repair factors leading to the reparation of DNA strand breaks. Serine ADP-ribosylation of proteins constitutes the primary form of ADP-ribosylation of proteins in response to DNA damage. HPF1 acts by completing the active site of PARP1 and PARP2: forms a composite active site composed of residues from HPF1 and PARP1 or PARP2. While HPF1 promotes the initiation of serine ADP-ribosylation, it restricts the polymerase activity of PARP1 and PARP2 in order to limit the length of poly-ADP-ribose chains. HPF1 also promotes tyrosine ADP-ribosylation, probably by conferring tyrosine specificity on PARP1. This Mus musculus (Mouse) protein is Histone PARylation factor 1.